Here is a 351-residue protein sequence, read N- to C-terminus: Phenylacetaldoxime dehydratase (351 aa).

This sequence belongs to the heme-containing dehydratase family. In terms of assembly, monomer. Requires heme b as cofactor.

The catalysed reaction is (Z)-phenylacetaldehyde oxime = phenylacetonitrile + H2O. Its function is as follows. Catalyzes the stoichiometric dehydration of Z-phenylacetaldoxime to phenylacetonitrile. Prefers the Z-form of phenylacetaldoxime over its E-isomer. This is Phenylacetaldoxime dehydratase from Bacillus sp. (strain OxB-1).